The chain runs to 587 residues: MKDTIRQLIQQALDQLTADGTLPAGLTPDIQVENTKDRSHGDFASNIAMMLAKPAGMKPRDLATRLVEALPAHEQLAKVEIAGPGFLNFFQDHIWLAASLDRALADERLGVRKAGPAQRVVIDLSSPNLAKEMHVGHLRSTIIGDAVARVLEFLGDTVIRQNHVGDWGTQFGMLLAYLEEQPVDAQAELHDLEVFYRAAKKRFDESPEFADRARELVVRLQAGDPDCLRLWTRFNEISLSHCQKVYDRLGVKLSMADVKGESAYNDDLAQVVADLTAKGLLTEDNGALCVFLEEFRNAEGNPLPVIVQKAGGGYLYATTDLAAMRYRHNVLHADRALYFVDQRQALHFQQVFEVARRAGFVPADMELEHMGFGTMNGADGRPFKTRDGGTVKLIDLLEEAESRAYALVKERNEQRVERGEEPFDEAQLREIGRVVGIDSVKYADLSKHRTSDYSFNFELMLSFEGNTAPYLLYACTRVASVFRKLGQGREQLGGRIVLEQPQELALAAQLAQFGDLLNNVALKGVPHLLCAYLYELAGLFSSFYEHCPILTAEDPAQKDSRLRLAALTGRTLEQGLELLGLKTLERM.

The short motif at 127 to 137 (PNLAKEMHVGH) is the 'HIGH' region element.

The protein belongs to the class-I aminoacyl-tRNA synthetase family. Monomer.

The protein localises to the cytoplasm. The catalysed reaction is tRNA(Arg) + L-arginine + ATP = L-arginyl-tRNA(Arg) + AMP + diphosphate. This chain is Arginine--tRNA ligase, found in Pseudomonas paraeruginosa (strain DSM 24068 / PA7) (Pseudomonas aeruginosa (strain PA7)).